A 329-amino-acid polypeptide reads, in one-letter code: HTH-type transcriptional regulator ArgR (329 aa).

In terms of domain architecture, HTH araC/xylS-type spans 214–312 (TQAVLLMEAN…GVTPREDRNQ (99 aa)). 2 consecutive DNA-binding regions (H-T-H motif) follow at residues 231–252 (DEIA…KQYL) and 279–302 (IIQI…RNFF). Residues 307–329 (REDRNQRRGGSAFETTFTPVERG) are disordered. The span at 319-329 (FETTFTPVERG) shows a compositional bias: polar residues.

Its function is as follows. ArgR could be a transcriptional activator of the dauBAR operon in response to the presence of L-Arg. The sequence is that of HTH-type transcriptional regulator ArgR (argR) from Pseudomonas aeruginosa (strain ATCC 15692 / DSM 22644 / CIP 104116 / JCM 14847 / LMG 12228 / 1C / PRS 101 / PAO1).